The primary structure comprises 494 residues: Acetyl-coenzyme A carboxylase carboxyl transferase subunit beta, chloroplastic (494 aa).

A CoA carboxyltransferase N-terminal domain is found at 230 to 494 (LWVQCENCYG…LHGFFPLNQN (265 aa)). Zn(2+) is bound by residues Cys-234, Cys-237, Cys-253, and Cys-256. The C4-type zinc finger occupies 234–256 (CENCYGLNYKKFFRSKMNICEQC).

This sequence belongs to the AccD/PCCB family. In terms of assembly, acetyl-CoA carboxylase is a heterohexamer composed of biotin carboxyl carrier protein, biotin carboxylase and 2 subunits each of ACCase subunit alpha and ACCase plastid-coded subunit beta (accD). Zn(2+) is required as a cofactor.

Its subcellular location is the plastid. The protein resides in the chloroplast stroma. The enzyme catalyses N(6)-carboxybiotinyl-L-lysyl-[protein] + acetyl-CoA = N(6)-biotinyl-L-lysyl-[protein] + malonyl-CoA. The protein operates within lipid metabolism; malonyl-CoA biosynthesis; malonyl-CoA from acetyl-CoA: step 1/1. Component of the acetyl coenzyme A carboxylase (ACC) complex. Biotin carboxylase (BC) catalyzes the carboxylation of biotin on its carrier protein (BCCP) and then the CO(2) group is transferred by the transcarboxylase to acetyl-CoA to form malonyl-CoA. The chain is Acetyl-coenzyme A carboxylase carboxyl transferase subunit beta, chloroplastic from Drimys granadensis.